Here is a 164-residue protein sequence, read N- to C-terminus: C-phycoerythrin class 1 subunit alpha (164 aa).

Residues cysteine 82 and cysteine 139 each contribute to the (2R,3E)-phycoerythrobilin site.

This sequence belongs to the phycobiliprotein family. Heterodimer of an alpha and a beta chain. Contains one covalently linked bilin chromophore.

It is found in the cellular thylakoid membrane. Functionally, light-harvesting photosynthetic bile pigment-protein from the phycobiliprotein complex. This is C-phycoerythrin class 1 subunit alpha (cpeA) from Synechococcus sp. (strain WH7803).